The sequence spans 420 residues: UDP-glucuronic acid decarboxylase 1 (420 aa).

Methionine 1 carries the post-translational modification N-acetylmethionine. The Cytoplasmic portion of the chain corresponds to 1-19 (MVSKGLLRLVSSVNRRKMK). The chain crosses the membrane as a helical; Signal-anchor for type II membrane protein span at residues 20–40 (LLLGIALFAYAASVWGNFVNM). The Lumenal portion of the chain corresponds to 41 to 420 (RSIQENGELK…RVKKGRTRHS (380 aa)). The residue at position 94 (threonine 94) is a Phosphothreonine. Positions 98, 99, 100, 119, 120, 122, 123, 124, 144, and 145 each coordinate NAD(+). UDP-alpha-D-glucuronate contacts are provided by leucine 149 and tyrosine 150. Positions 159 and 161 each coordinate NAD(+). Lysine 177 contributes to the UDP-alpha-D-glucuronate binding site. Threonine 178 contacts NAD(+). UDP-alpha-D-glucuronate contacts are provided by asparagine 185, glycine 188, lysine 191, and arginine 192. NAD(+) is bound by residues alanine 200, tyrosine 231, and lysine 235. Tyrosine 231 acts as the Proton acceptor in catalysis. UDP-alpha-D-glucuronate is bound by residues tyrosine 245, glutamine 248, and glutamate 249. 3 residues coordinate NAD(+): threonine 261, histidine 267, and arginine 272. Residue asparagine 316 is glycosylated (N-linked (GlcNAc...) asparagine).

It belongs to the NAD(P)-dependent epimerase/dehydratase family. UDP-glucuronic acid decarboxylase subfamily. In terms of assembly, homodimer and homotetramer. Interacts with AKT1. It depends on NAD(+) as a cofactor. Ubiquitous. Detected in heart, brain, spleen, lung, testis, liver, skeletal muscle and kidney.

The protein resides in the golgi apparatus. It is found in the golgi stack membrane. The enzyme catalyses UDP-alpha-D-glucuronate + H(+) = UDP-alpha-D-xylose + CO2. The protein operates within nucleotide-sugar biosynthesis; UDP-alpha-D-xylose biosynthesis; UDP-alpha-D-xylose from UDP-alpha-D-glucuronate: step 1/1. In terms of biological role, catalyzes the NAD-dependent decarboxylation of UDP-glucuronic acid to UDP-xylose. Necessary for the biosynthesis of the core tetrasaccharide in glycosaminoglycan biosynthesis. In Rattus norvegicus (Rat), this protein is UDP-glucuronic acid decarboxylase 1.